A 631-amino-acid chain; its full sequence is Probable potassium transport system protein Kup 1 (631 aa).

The next 12 membrane-spanning stretches (helical) occupy residues 16 to 36 (LGLS…SPLY), 58 to 78 (VLSL…LVFV), 109 to 129 (VLVF…TLTP), 145 to 165 (PLFH…LFLI), 173 to 193 (VGAL…LLGI), 219 to 239 (GWSG…GEAL), 255 to 275 (WFCC…ALLL), 288 to 308 (LAPP…TIIA), 345 to 365 (IYIP…VAGF), 370 to 390 (GLAA…ALLV), 402 to 422 (PLAV…FFGA), and 427 to 447 (VGAG…VMIT).

This sequence belongs to the HAK/KUP transporter (TC 2.A.72) family.

The protein localises to the cell inner membrane. The catalysed reaction is K(+)(in) + H(+)(in) = K(+)(out) + H(+)(out). Its function is as follows. Transport of potassium into the cell. Likely operates as a K(+):H(+) symporter. The sequence is that of Probable potassium transport system protein Kup 1 from Geobacter sulfurreducens (strain ATCC 51573 / DSM 12127 / PCA).